The primary structure comprises 149 residues: IQ domain-containing protein F5 (149 aa).

IQ domains are found at residues 12–41 (ENKA…RAWI) and 68–97 (QEWA…AVRI).

The chain is IQ domain-containing protein F5 (IQCF5) from Bos taurus (Bovine).